Consider the following 141-residue polypeptide: 3-hydroxyacyl-[acyl-carrier-protein] dehydratase FabZ (141 aa).

His-48 is an active-site residue.

This sequence belongs to the thioester dehydratase family. FabZ subfamily.

The protein localises to the cytoplasm. It carries out the reaction a (3R)-hydroxyacyl-[ACP] = a (2E)-enoyl-[ACP] + H2O. Its function is as follows. Involved in unsaturated fatty acids biosynthesis. Catalyzes the dehydration of short chain beta-hydroxyacyl-ACPs and long chain saturated and unsaturated beta-hydroxyacyl-ACPs. In Streptococcus thermophilus (strain CNRZ 1066), this protein is 3-hydroxyacyl-[acyl-carrier-protein] dehydratase FabZ.